The following is a 321-amino-acid chain: Methionyl-tRNA formyltransferase (321 aa).

Position 113–116 (113–116 (SILP)) interacts with (6S)-5,6,7,8-tetrahydrofolate.

The protein belongs to the Fmt family.

It carries out the reaction L-methionyl-tRNA(fMet) + (6R)-10-formyltetrahydrofolate = N-formyl-L-methionyl-tRNA(fMet) + (6S)-5,6,7,8-tetrahydrofolate + H(+). In terms of biological role, attaches a formyl group to the free amino group of methionyl-tRNA(fMet). The formyl group appears to play a dual role in the initiator identity of N-formylmethionyl-tRNA by promoting its recognition by IF2 and preventing the misappropriation of this tRNA by the elongation apparatus. This Pseudoalteromonas translucida (strain TAC 125) protein is Methionyl-tRNA formyltransferase.